We begin with the raw amino-acid sequence, 170 residues long: Ribosome maturation factor RimM (170 aa).

The PRC barrel domain maps to 97–170 (NADEYYWVDL…LVVVDWDPEF (74 aa)).

The protein belongs to the RimM family. Binds ribosomal protein uS19.

The protein resides in the cytoplasm. In terms of biological role, an accessory protein needed during the final step in the assembly of 30S ribosomal subunit, possibly for assembly of the head region. Essential for efficient processing of 16S rRNA. May be needed both before and after RbfA during the maturation of 16S rRNA. It has affinity for free ribosomal 30S subunits but not for 70S ribosomes. The chain is Ribosome maturation factor RimM from Stenotrophomonas maltophilia (strain R551-3).